We begin with the raw amino-acid sequence, 396 residues long: 1-deoxy-D-xylulose 5-phosphate reductoisomerase (396 aa).

NADPH is bound by residues threonine 15, glycine 16, serine 17, isoleucine 18, glycine 41, and asparagine 129. Lysine 130 is a 1-deoxy-D-xylulose 5-phosphate binding site. Residue glutamate 131 coordinates NADPH. Aspartate 155 lines the Mn(2+) pocket. 1-deoxy-D-xylulose 5-phosphate is bound by residues serine 156, glutamate 157, serine 182, and histidine 205. Glutamate 157 serves as a coordination point for Mn(2+). An NADPH-binding site is contributed by glycine 211. 1-deoxy-D-xylulose 5-phosphate contacts are provided by serine 218, asparagine 223, lysine 224, and glutamate 227. Glutamate 227 lines the Mn(2+) pocket.

It belongs to the DXR family. It depends on Mg(2+) as a cofactor. Mn(2+) serves as cofactor.

The enzyme catalyses 2-C-methyl-D-erythritol 4-phosphate + NADP(+) = 1-deoxy-D-xylulose 5-phosphate + NADPH + H(+). The protein operates within isoprenoid biosynthesis; isopentenyl diphosphate biosynthesis via DXP pathway; isopentenyl diphosphate from 1-deoxy-D-xylulose 5-phosphate: step 1/6. Catalyzes the NADPH-dependent rearrangement and reduction of 1-deoxy-D-xylulose-5-phosphate (DXP) to 2-C-methyl-D-erythritol 4-phosphate (MEP). This chain is 1-deoxy-D-xylulose 5-phosphate reductoisomerase, found in Xanthomonas euvesicatoria pv. vesicatoria (strain 85-10) (Xanthomonas campestris pv. vesicatoria).